We begin with the raw amino-acid sequence, 140 residues long: Ribonuclease P protein component (140 aa).

It belongs to the RnpA family. In terms of assembly, consists of a catalytic RNA component (M1 or rnpB) and a protein subunit.

It carries out the reaction Endonucleolytic cleavage of RNA, removing 5'-extranucleotides from tRNA precursor.. Its function is as follows. RNaseP catalyzes the removal of the 5'-leader sequence from pre-tRNA to produce the mature 5'-terminus. It can also cleave other RNA substrates such as 4.5S RNA. The protein component plays an auxiliary but essential role in vivo by binding to the 5'-leader sequence and broadening the substrate specificity of the ribozyme. The polypeptide is Ribonuclease P protein component (Nostoc sp. (strain PCC 7120 / SAG 25.82 / UTEX 2576)).